Reading from the N-terminus, the 66-residue chain is MAFLKKSLFLVLFLGLVSLSICEEEKRETEEEEYNQEDDDKSEEKRFLSLIPTAINAVSALAKHFG.

Positions 1–22 (MAFLKKSLFLVLFLGLVSLSIC) are cleaved as a signal peptide. The propeptide occupies 23–44 (EEEKRETEEEEYNQEDDDKSEE). Phe-65 bears the Phenylalanine amide mark.

As to expression, expressed by the skin glands.

Its subcellular location is the secreted. Its function is as follows. Has antimicrobial activity. In Pithecopus azureus (Orange-legged monkey tree frog), this protein is Phylloseptin-Az3.